We begin with the raw amino-acid sequence, 296 residues long: 4-diphosphocytidyl-2-C-methyl-D-erythritol kinase (296 aa).

Lysine 12 is an active-site residue. Residue 94 to 104 (PAQAGMGGGSS) participates in ATP binding. The active site involves aspartate 136.

Belongs to the GHMP kinase family. IspE subfamily.

It catalyses the reaction 4-CDP-2-C-methyl-D-erythritol + ATP = 4-CDP-2-C-methyl-D-erythritol 2-phosphate + ADP + H(+). It participates in isoprenoid biosynthesis; isopentenyl diphosphate biosynthesis via DXP pathway; isopentenyl diphosphate from 1-deoxy-D-xylulose 5-phosphate: step 3/6. Catalyzes the phosphorylation of the position 2 hydroxy group of 4-diphosphocytidyl-2C-methyl-D-erythritol. This chain is 4-diphosphocytidyl-2-C-methyl-D-erythritol kinase, found in Variovorax paradoxus (strain S110).